A 157-amino-acid polypeptide reads, in one-letter code: SsrA-binding protein (157 aa).

Positions aspartate 135–arginine 151 are enriched in basic and acidic residues. The disordered stretch occupies residues aspartate 135–glycine 157.

Belongs to the SmpB family.

It is found in the cytoplasm. In terms of biological role, required for rescue of stalled ribosomes mediated by trans-translation. Binds to transfer-messenger RNA (tmRNA), required for stable association of tmRNA with ribosomes. tmRNA and SmpB together mimic tRNA shape, replacing the anticodon stem-loop with SmpB. tmRNA is encoded by the ssrA gene; the 2 termini fold to resemble tRNA(Ala) and it encodes a 'tag peptide', a short internal open reading frame. During trans-translation Ala-aminoacylated tmRNA acts like a tRNA, entering the A-site of stalled ribosomes, displacing the stalled mRNA. The ribosome then switches to translate the ORF on the tmRNA; the nascent peptide is terminated with the 'tag peptide' encoded by the tmRNA and targeted for degradation. The ribosome is freed to recommence translation, which seems to be the essential function of trans-translation. The sequence is that of SsrA-binding protein from Rhodopseudomonas palustris (strain BisB5).